Consider the following 185-residue polypeptide: Large ribosomal subunit protein uL5 (185 aa).

It belongs to the universal ribosomal protein uL5 family. Part of the 50S ribosomal subunit; part of the 5S rRNA/L5/L18/L25 subcomplex. Contacts the 5S rRNA and the P site tRNA. Forms a bridge to the 30S subunit in the 70S ribosome.

This is one of the proteins that bind and probably mediate the attachment of the 5S RNA into the large ribosomal subunit, where it forms part of the central protuberance. In the 70S ribosome it contacts protein S13 of the 30S subunit (bridge B1b), connecting the 2 subunits; this bridge is implicated in subunit movement. Contacts the P site tRNA; the 5S rRNA and some of its associated proteins might help stabilize positioning of ribosome-bound tRNAs. This Bacteroides thetaiotaomicron (strain ATCC 29148 / DSM 2079 / JCM 5827 / CCUG 10774 / NCTC 10582 / VPI-5482 / E50) protein is Large ribosomal subunit protein uL5.